Reading from the N-terminus, the 269-residue chain is Indole-3-glycerol phosphate synthase (269 aa).

It belongs to the TrpC family.

It catalyses the reaction 1-(2-carboxyphenylamino)-1-deoxy-D-ribulose 5-phosphate + H(+) = (1S,2R)-1-C-(indol-3-yl)glycerol 3-phosphate + CO2 + H2O. It participates in amino-acid biosynthesis; L-tryptophan biosynthesis; L-tryptophan from chorismate: step 4/5. The sequence is that of Indole-3-glycerol phosphate synthase from Rhodococcus jostii (strain RHA1).